The chain runs to 253 residues: Core protein VP8 (253 aa).

A propeptide spanning residues 1-31 (MNDLLLENLFGEKALCAQVTRDQLLEIIAAG) is cleaved from the precursor.

It belongs to the chordopoxvirinae VP8 family. In terms of processing, undergoes morphogenesis-associated proteolysis which cleaves the 28 kDa to a 25-kDa product. Proteolytic cleavage of major core proteins P4a (A10L), P4b (A3L), and VP8 (L4R), which occurs at a late stage of core formation, is required for production of infectious mature virions (MV).

It is found in the virion. In terms of biological role, major core structural protein. This is Core protein VP8 from Vertebrata (FPV).